Here is an 892-residue protein sequence, read N- to C-terminus: Transposase for transposon Tn4556 (892 aa).

Over residues 1 to 12 (MGGRAGLDDGRG) the composition is skewed to basic and acidic residues. Positions 1–63 (MGGRAGLDDG…GQPARDAEHR (63 aa)) are disordered. Low complexity predominate over residues 23-34 (VAEGAAGAAAWG).

The protein belongs to the transposase 7 family.

In terms of biological role, required for transposition of transposon Tn4556. The chain is Transposase for transposon Tn4556 (tnpA) from Streptomyces fradiae (Streptomyces roseoflavus).